Here is a 278-residue protein sequence, read N- to C-terminus: Large ribosomal subunit protein uL2 (278 aa).

Positions 202 to 278 (ANINDGKAGR…IMRSRHQRKK (77 aa)) are disordered.

The protein belongs to the universal ribosomal protein uL2 family. In terms of assembly, part of the 50S ribosomal subunit. Forms a bridge to the 30S subunit in the 70S ribosome.

Functionally, one of the primary rRNA binding proteins. Required for association of the 30S and 50S subunits to form the 70S ribosome, for tRNA binding and peptide bond formation. It has been suggested to have peptidyltransferase activity; this is somewhat controversial. Makes several contacts with the 16S rRNA in the 70S ribosome. In Rhizobium johnstonii (strain DSM 114642 / LMG 32736 / 3841) (Rhizobium leguminosarum bv. viciae), this protein is Large ribosomal subunit protein uL2.